The chain runs to 37 residues: Large ribosomal subunit protein bL36 (37 aa).

The protein belongs to the bacterial ribosomal protein bL36 family.

This Mycobacteroides abscessus (strain ATCC 19977 / DSM 44196 / CCUG 20993 / CIP 104536 / JCM 13569 / NCTC 13031 / TMC 1543 / L948) (Mycobacterium abscessus) protein is Large ribosomal subunit protein bL36.